Consider the following 93-residue polypeptide: UPF0358 protein lmo1070 (93 aa).

It belongs to the UPF0358 family.

The protein is UPF0358 protein lmo1070 of Listeria monocytogenes serovar 1/2a (strain ATCC BAA-679 / EGD-e).